The chain runs to 370 residues: Aminomethyltransferase (370 aa).

It belongs to the GcvT family. As to quaternary structure, the glycine cleavage system is composed of four proteins: P, T, L and H.

It catalyses the reaction N(6)-[(R)-S(8)-aminomethyldihydrolipoyl]-L-lysyl-[protein] + (6S)-5,6,7,8-tetrahydrofolate = N(6)-[(R)-dihydrolipoyl]-L-lysyl-[protein] + (6R)-5,10-methylene-5,6,7,8-tetrahydrofolate + NH4(+). In terms of biological role, the glycine cleavage system catalyzes the degradation of glycine. The chain is Aminomethyltransferase from Clostridium botulinum (strain Okra / Type B1).